Here is a 312-residue protein sequence, read N- to C-terminus: Olfactory receptor 52A1 (312 aa).

Residues 1 to 27 lie on the Extracellular side of the membrane; the sequence is MSISNITVYMPSVLTLVGIPGLESVQC. N5 carries N-linked (GlcNAc...) asparagine glycosylation. The helical transmembrane segment at 28–48 threads the bilayer; the sequence is WIGIPFCAIYLIAMIGNSLLL. Over 49–56 the chain is Cytoplasmic; it reads SIIKSERS. The chain crosses the membrane as a helical span at residues 57-77; it reads LHEPLYIFLGMLGATDIALAS. The Extracellular portion of the chain corresponds to 78-101; it reads SIMPKMLGIFWFNVPEIYFDSCLL. The cysteines at positions 99 and 182 are disulfide-linked. A helical transmembrane segment spans residues 102–122; sequence QMWFIHTLQGIESGILVAMAL. Residues 123–141 are Cytoplasmic-facing; it reads DRYVAICYPLRHANIFTHQ. The helical transmembrane segment at 142–162 threads the bilayer; it reads LVIQIGTMVVLRAAILVAPCL. At 163–199 the chain is on the extracellular side; sequence VLIKCRFQFYHTTVISHSYCEHMAIVKLAAANVQVNK. A helical transmembrane segment spans residues 200–220; it reads IYGLFVAFTVAGFDLTFITLS. Residues 221-240 lie on the Cytoplasmic side of the membrane; the sequence is YIQIFITVFRLPQKEARFKA. A helical membrane pass occupies residues 241–261; it reads FNTCIAHICVFLQFYLLAFFS. Topologically, residues 262-276 are extracellular; the sequence is FFTHRFGSHISPYIH. Residues 277–297 traverse the membrane as a helical segment; it reads ILFSSIYLLVPPFLNPLVYGA. The Cytoplasmic segment spans residues 298–312; that stretch reads KTTQIRIHVVKMFCS.

This sequence belongs to the G-protein coupled receptor 1 family.

Its subcellular location is the cell membrane. Its function is as follows. Odorant receptor. The chain is Olfactory receptor 52A1 (OR52A1) from Homo sapiens (Human).